We begin with the raw amino-acid sequence, 196 residues long: Segregation and condensation protein B (196 aa).

It belongs to the ScpB family. As to quaternary structure, homodimer. Homodimerization may be required to stabilize the binding of ScpA to the Smc head domains. Component of a cohesin-like complex composed of ScpA, ScpB and the Smc homodimer, in which ScpA and ScpB bind to the head domain of Smc. The presence of the three proteins is required for the association of the complex with DNA.

It localises to the cytoplasm. In terms of biological role, participates in chromosomal partition during cell division. May act via the formation of a condensin-like complex containing Smc and ScpA that pull DNA away from mid-cell into both cell halves. This chain is Segregation and condensation protein B, found in Pediococcus pentosaceus (strain ATCC 25745 / CCUG 21536 / LMG 10740 / 183-1w).